A 1621-amino-acid chain; its full sequence is ABC transporter A family member 2 (1621 aa).

7 helical membrane-spanning segments follow: residues 30 to 50, 234 to 254, 276 to 296, 309 to 329, 338 to 358, 365 to 385, and 405 to 425; these read ILFP…VMAF, SVFI…DLVI, ISWM…ISII, GVVI…AFIL, FCGL…IFVA, GAKL…IFAM, and NQVI…VWYL. The region spanning 484-717 is the ABC transporter 1 domain; sequence ISIRNLRKEY…FGCGYLLTCS (234 aa). ATP is bound at residue 520-527; the sequence is GPNGSGKS. 7 helical membrane-spanning segments follow: residues 856–876, 1033–1053, 1083–1103, 1111–1131, 1142–1162, 1183–1203, and 1227–1247; these read FFLT…MYKA, IVYF…SFAG, VWDY…LAGI, FGLM…LSYL, ATGA…IISL, VDIV…LFLV, and GSPM…IMIL. Residues 1293–1528 enclose the ABC transporter 2 domain; the sequence is LQFRNLHKLF…FGAGYTFDVK (236 aa). ATP is bound at residue 1331 to 1338; the sequence is GLNGAGKT.

This sequence belongs to the ABC transporter superfamily. ABCA family.

The protein resides in the membrane. The protein is ABC transporter A family member 2 (abcA2) of Dictyostelium discoideum (Social amoeba).